The following is a 339-amino-acid chain: Beta-ketoacyl-[acyl-carrier-protein] synthase III (339 aa).

Residues Cys-119 and His-262 contribute to the active site. Residues 263-267 form an ACP-binding region; sequence QANQR. Asn-292 is a catalytic residue.

This sequence belongs to the thiolase-like superfamily. FabH family. As to quaternary structure, homodimer.

It is found in the cytoplasm. It catalyses the reaction malonyl-[ACP] + acetyl-CoA + H(+) = 3-oxobutanoyl-[ACP] + CO2 + CoA. It participates in lipid metabolism; fatty acid biosynthesis. In terms of biological role, catalyzes the condensation reaction of fatty acid synthesis by the addition to an acyl acceptor of two carbons from malonyl-ACP. Catalyzes the first condensation reaction which initiates fatty acid synthesis and may therefore play a role in governing the total rate of fatty acid production. Possesses both acetoacetyl-ACP synthase and acetyl transacylase activities. Its substrate specificity determines the biosynthesis of branched-chain and/or straight-chain of fatty acids. This chain is Beta-ketoacyl-[acyl-carrier-protein] synthase III, found in Prochlorococcus marinus (strain MIT 9313).